We begin with the raw amino-acid sequence, 120 residues long: Large ribosomal subunit protein bL12 (120 aa).

The protein belongs to the bacterial ribosomal protein bL12 family. As to quaternary structure, homodimer. Part of the ribosomal stalk of the 50S ribosomal subunit. Forms a multimeric L10(L12)X complex, where L10 forms an elongated spine to which 2 to 4 L12 dimers bind in a sequential fashion. Binds GTP-bound translation factors.

Functionally, forms part of the ribosomal stalk which helps the ribosome interact with GTP-bound translation factors. Is thus essential for accurate translation. This is Large ribosomal subunit protein bL12 from Pseudoalteromonas translucida (strain TAC 125).